A 260-amino-acid chain; its full sequence is PHD finger protein ALFIN-LIKE 5 (260 aa).

Met-1 bears the N-acetylmethionine mark. Residues 142 to 203 (AEKQTKEMPS…EEDEDEDEHG (62 aa)) form a disordered region. The span at 148-165 (EMPSSANQNGNRSKSNSK) shows a compositional bias: polar residues. Residues 167 to 181 (RGLESKSSKTIHAKD) show a composition bias toward basic and acidic residues. Residues 182-202 (EEEGLELEEGEEEEDEDEDEH) are compositionally biased toward acidic residues. The PHD-type zinc finger occupies 204 to 256 (ETLCGACGDNYASDEFWICCDMCEKWFHGECVKITPARAEHIKHYKCPTCSNK).

The protein belongs to the Alfin family. Interacts with H3K4me3 and to a lesser extent with H3K4me2. As to expression, ubiquitously expressed.

It is found in the nucleus. Its function is as follows. Histone-binding component that specifically recognizes H3 tails trimethylated on 'Lys-4' (H3K4me3), which mark transcription start sites of virtually all active genes. This is PHD finger protein ALFIN-LIKE 5 (AL5) from Arabidopsis thaliana (Mouse-ear cress).